We begin with the raw amino-acid sequence, 181 residues long: Adenine phosphoribosyltransferase (181 aa).

The protein belongs to the purine/pyrimidine phosphoribosyltransferase family. Homodimer.

The protein localises to the cytoplasm. The enzyme catalyses AMP + diphosphate = 5-phospho-alpha-D-ribose 1-diphosphate + adenine. It functions in the pathway purine metabolism; AMP biosynthesis via salvage pathway; AMP from adenine: step 1/1. In terms of biological role, catalyzes a salvage reaction resulting in the formation of AMP, that is energically less costly than de novo synthesis. The chain is Adenine phosphoribosyltransferase from Brucella anthropi (strain ATCC 49188 / DSM 6882 / CCUG 24695 / JCM 21032 / LMG 3331 / NBRC 15819 / NCTC 12168 / Alc 37) (Ochrobactrum anthropi).